The sequence spans 398 residues: Protein ELC (398 aa).

The UEV domain occupies 18 to 162 (ALSQRGPSSV…ARDPPLYSRR (145 aa)). The tract at residues 157–202 (PLYSRRRPQPPPPSPPTVYDSSLSRPPSADQSLPRPFPPSPYGGGV) is disordered. A compositionally biased stretch (polar residues) spans 175 to 187 (YDSSLSRPPSADQ). Residues 247-291 (EAEAEELLSLQAGLKRREDELNIGLKEMVEEKETLEQQLQIISMN) adopt a coiled-coil conformation. The region spanning 322-390 (DTLSKQMLEC…RAAQMEVQVA (69 aa)) is the SB domain.

The protein belongs to the ubiquitin-conjugating enzyme family. UEV subfamily. As to quaternary structure, component of the endosomal sorting required for transport complex I (ESCRT-I), composed of ELC, VPS28 and VPS37. Interacts with VPS28 and VPS37. Binds ubiquitin in vitro. Interacts with FREE1. Interacts with TOL9/TOM1D. Interacts with BRO1/ALIX. Interacts with SINAT1, SINAT2, SINAT3 and SINAT4. In terms of processing, ubiquitinated by SINAT1, SINAT2, SINAT3 and SINAT4 for subsequent proteasomal degradation. In terms of tissue distribution, expressed in roots, stems, leaves and flowers.

It is found in the early endosome. The protein resides in the late endosome. Its subcellular location is the prevacuolar compartment. In terms of biological role, component of the ESCRT-I complex (endosomal sorting complex required for transport I), a regulator of vesicular trafficking process. Required for the sorting of endocytic ubiquitinated cargos into multivesicular bodies (MVBs). May control nuclear division through the microtubule cytoskeleton. This Arabidopsis thaliana (Mouse-ear cress) protein is Protein ELC.